A 59-amino-acid chain; its full sequence is UPF0391 membrane protein lpg2521 (59 aa).

Helical transmembrane passes span A5–V25 and I30–L50.

This sequence belongs to the UPF0391 family.

The protein resides in the cell membrane. The polypeptide is UPF0391 membrane protein lpg2521 (Legionella pneumophila subsp. pneumophila (strain Philadelphia 1 / ATCC 33152 / DSM 7513)).